Reading from the N-terminus, the 504-residue chain is Sodium-coupled neutral amino acid transporter 3 (504 aa).

The N-linked (GlcNAc...) asparagine glycan is linked to asparagine 74. 5 helical membrane-spanning segments follow: residues 83–103, 106–126, 144–164, 187–207, and 213–233; these read GILG…LFLL, VALL…VVGI, AAAL…LYII, MNGN…LALM, and LGYS…AVIY. Cysteines 240 and 275 form a disulfide. Asparagine 247, asparagine 248, asparagine 252, and asparagine 323 each carry an N-linked (GlcNAc...) asparagine glycan. 5 helical membrane-spanning segments follow: residues 324–344, 366–386, 408–428, 431–451, and 471–491; these read LSIA…YLTF, ILCV…IVLF, VLIA…APNI, IFGV…PAIF, and ALCF…FIII.

This sequence belongs to the amino acid/polyamine transporter 2 family.

The protein resides in the cell membrane. Its subcellular location is the basolateral cell membrane. The enzyme catalyses L-glutamine(out) + Na(+)(out) + H(+)(in) = L-glutamine(in) + Na(+)(in) + H(+)(out). It carries out the reaction L-asparagine(out) + Na(+)(out) + H(+)(in) = L-asparagine(in) + Na(+)(in) + H(+)(out). The catalysed reaction is L-histidine(out) + Na(+)(out) + H(+)(in) = L-histidine(in) + Na(+)(in) + H(+)(out). In terms of biological role, symporter that cotransports specific neutral amino acids and sodium ions, coupled to an H(+) antiporter activity. Mainly participates in the glutamate-GABA-glutamine cycle in brain where it transports L-glutamine from astrocytes in the intercellular space for the replenishment of both neurotransmitters glutamate and gamma-aminobutyric acid (GABA) in neurons and also functions as the major influx transporter in ganglion cells mediating the uptake of glutamine. The transport activity is specific for L-glutamine, L-histidine and L-asparagine. The transport is electroneutral coupled to the cotransport of 1 Na(+) and the antiport of 1 H(+). The transport is pH dependent, saturable, Li(+) tolerant and functions in both direction depending on the concentration gradients of its substrates and cotransported ions. Also mediates an amino acid-gated H(+) conductance that is not stoichiometrically coupled to the amino acid transport but which influences the ionic gradients that drive the amino acid transport. In addition, may play a role in nitrogen metabolism, amino acid homeostasis, glucose metabolism and renal ammoniagenesis. This Homo sapiens (Human) protein is Sodium-coupled neutral amino acid transporter 3.